We begin with the raw amino-acid sequence, 407 residues long: Biotin synthase (407 aa).

One can recognise a Radical SAM core domain in the interval 47–277; that stretch reads WFGRRVKLNY…DVEVRIAGGR (231 aa). Cysteine 65, cysteine 69, and cysteine 72 together coordinate [4Fe-4S] cluster. [2Fe-2S] cluster-binding residues include cysteine 109, cysteine 142, cysteine 202, and arginine 272. A disordered region spans residues 368–407; it reads GGGVCAPAPAATTPRPAEEPRTDLVAVRRRGAGTDLAPNA. A compositionally biased stretch (low complexity) spans 373 to 382; the sequence is APAPAATTPR.

Belongs to the radical SAM superfamily. Biotin synthase family. Homodimer. [4Fe-4S] cluster serves as cofactor. [2Fe-2S] cluster is required as a cofactor.

The enzyme catalyses (4R,5S)-dethiobiotin + (sulfur carrier)-SH + 2 reduced [2Fe-2S]-[ferredoxin] + 2 S-adenosyl-L-methionine = (sulfur carrier)-H + biotin + 2 5'-deoxyadenosine + 2 L-methionine + 2 oxidized [2Fe-2S]-[ferredoxin]. The protein operates within cofactor biosynthesis; biotin biosynthesis; biotin from 7,8-diaminononanoate: step 2/2. In terms of biological role, catalyzes the conversion of dethiobiotin (DTB) to biotin by the insertion of a sulfur atom into dethiobiotin via a radical-based mechanism. The sequence is that of Biotin synthase from Streptomyces coelicolor (strain ATCC BAA-471 / A3(2) / M145).